Reading from the N-terminus, the 209-residue chain is Outer-membrane lipoprotein LolB (209 aa).

An N-terminal signal peptide occupies residues 1–17; that stretch reads MKKSTLLFSLMAMALSG. Cysteine 18 is lipidated: N-palmitoyl cysteine. A lipid anchor (S-diacylglycerol cysteine) is attached at cysteine 18.

Belongs to the LolB family. Monomer.

The protein resides in the cell outer membrane. Its function is as follows. Plays a critical role in the incorporation of lipoproteins in the outer membrane after they are released by the LolA protein. In Haemophilus ducreyi (strain 35000HP / ATCC 700724), this protein is Outer-membrane lipoprotein LolB.